We begin with the raw amino-acid sequence, 491 residues long: Synaptotagmin-9 (491 aa).

Residues 1–52 are Vesicular-facing; it reads MPGARDALCHQALQLLAELCARGALEHDSCQDFIYHLRDRARPRLRDPDISV. Positions 9-31 are cysteine motif; it reads CHQALQLLAELCARGALEHDSCQ. A helical membrane pass occupies residues 53 to 73; sequence SLLTLVVTACGLALFGVSLFV. Residues 74 to 491 are Cytoplasmic-facing; that stretch reads SWKLCWVPWR…AHWHSLVEKR (418 aa). A Phosphoserine modification is found at serine 177. 2 C2 domains span residues 220 to 341 and 352 to 485; these read ACGK…ILWK and DLGE…AHWH. Aspartate 251, aspartate 257, aspartate 309, phenylalanine 310, aspartate 311, serine 314, aspartate 317, aspartate 383, aspartate 389, aspartate 443, and aspartate 445 together coordinate Ca(2+).

The protein belongs to the synaptotagmin family. As to quaternary structure, homodimer; disulfide-linked via the cysteine motif. Can also form heterodimers with SYT3, SYT6, SYT7 and SYT10. The cofactor is Ca(2+).

The protein resides in the cytoplasmic vesicle. It is found in the secretory vesicle. Its subcellular location is the synaptic vesicle membrane. May be involved in Ca(2+)-dependent exocytosis of secretory vesicles through Ca(2+) and phospholipid binding to the C2 domain or may serve as Ca(2+) sensors in the process of vesicular trafficking and exocytosis. This chain is Synaptotagmin-9 (SYT9), found in Homo sapiens (Human).